Reading from the N-terminus, the 207-residue chain is Ribosomal RNA small subunit methyltransferase G (207 aa).

S-adenosyl-L-methionine contacts are provided by residues glycine 73, leucine 78, 124–125 (VE), and arginine 139.

The protein belongs to the methyltransferase superfamily. RNA methyltransferase RsmG family.

It is found in the cytoplasm. It catalyses the reaction guanosine(527) in 16S rRNA + S-adenosyl-L-methionine = N(7)-methylguanosine(527) in 16S rRNA + S-adenosyl-L-homocysteine. Functionally, specifically methylates the N7 position of guanine in position 527 of 16S rRNA. This is Ribosomal RNA small subunit methyltransferase G from Klebsiella pneumoniae subsp. pneumoniae (strain ATCC 700721 / MGH 78578).